Here is a 402-residue protein sequence, read N- to C-terminus: Phosphoglycerate kinase (402 aa).

Substrate contacts are provided by residues 21 to 23 (DLN), Arg-36, 59 to 62 (HLGR), Arg-114, and Arg-147. ATP is bound by residues Lys-202, Glu-329, and 355 to 358 (GGDT).

The protein belongs to the phosphoglycerate kinase family. Monomer.

The protein localises to the cytoplasm. It catalyses the reaction (2R)-3-phosphoglycerate + ATP = (2R)-3-phospho-glyceroyl phosphate + ADP. Its pathway is carbohydrate degradation; glycolysis; pyruvate from D-glyceraldehyde 3-phosphate: step 2/5. The chain is Phosphoglycerate kinase from Psychrobacter sp. (strain PRwf-1).